Reading from the N-terminus, the 215-residue chain is Phosphatidylserine decarboxylase proenzyme (215 aa).

Ser185 serves as the catalytic Schiff-base intermediate with substrate; via pyruvic acid. At Ser185 the chain carries Pyruvic acid (Ser); by autocatalysis.

It belongs to the phosphatidylserine decarboxylase family. PSD-A subfamily. Heterodimer of a large membrane-associated beta subunit and a small pyruvoyl-containing alpha subunit. The cofactor is pyruvate. Is synthesized initially as an inactive proenzyme. Formation of the active enzyme involves a self-maturation process in which the active site pyruvoyl group is generated from an internal serine residue via an autocatalytic post-translational modification. Two non-identical subunits are generated from the proenzyme in this reaction, and the pyruvate is formed at the N-terminus of the alpha chain, which is derived from the carboxyl end of the proenzyme. The post-translation cleavage follows an unusual pathway, termed non-hydrolytic serinolysis, in which the side chain hydroxyl group of the serine supplies its oxygen atom to form the C-terminus of the beta chain, while the remainder of the serine residue undergoes an oxidative deamination to produce ammonia and the pyruvoyl prosthetic group on the alpha chain.

It localises to the cell membrane. It carries out the reaction a 1,2-diacyl-sn-glycero-3-phospho-L-serine + H(+) = a 1,2-diacyl-sn-glycero-3-phosphoethanolamine + CO2. It functions in the pathway phospholipid metabolism; phosphatidylethanolamine biosynthesis; phosphatidylethanolamine from CDP-diacylglycerol: step 2/2. Catalyzes the formation of phosphatidylethanolamine (PtdEtn) from phosphatidylserine (PtdSer). This is Phosphatidylserine decarboxylase proenzyme from Streptomyces griseus subsp. griseus (strain JCM 4626 / CBS 651.72 / NBRC 13350 / KCC S-0626 / ISP 5235).